Consider the following 89-residue polypeptide: Large ribosomal subunit protein bL27 (89 aa).

Positions 1 to 21 are disordered; that stretch reads MAHKKAGGSSRNGRDSKGKRL.

The protein belongs to the bacterial ribosomal protein bL27 family.

The chain is Large ribosomal subunit protein bL27 from Bradyrhizobium sp. (strain BTAi1 / ATCC BAA-1182).